The primary structure comprises 370 residues: Gibberellin 2-beta-dioxygenase 2 (370 aa).

The Fe2OG dioxygenase domain maps to aspartate 186–proline 306. Tyrosine 196 serves as a coordination point for 2-oxoglutarate. The Fe cation site is built by histidine 224, aspartate 226, and histidine 287. 2-oxoglutarate contacts are provided by arginine 297 and serine 299.

This sequence belongs to the iron/ascorbate-dependent oxidoreductase family. GA2OX subfamily. Fe(2+) is required as a cofactor.

It catalyses the reaction gibberellin A1 + 2-oxoglutarate + O2 = gibberellin A8 + succinate + CO2. Functionally, catalyzes the 2-beta-hydroxylation of several biologically active gibberellins, leading to the homeostatic regulation of their endogenous level. Catabolism of gibberellins (GAs) plays a central role in plant development. In Oryza sativa subsp. japonica (Rice), this protein is Gibberellin 2-beta-dioxygenase 2.